A 144-amino-acid chain; its full sequence is Large ribosomal subunit protein uL13 (144 aa).

The protein belongs to the universal ribosomal protein uL13 family. As to quaternary structure, part of the 50S ribosomal subunit.

In terms of biological role, this protein is one of the early assembly proteins of the 50S ribosomal subunit, although it is not seen to bind rRNA by itself. It is important during the early stages of 50S assembly. The chain is Large ribosomal subunit protein uL13 from Desulfovibrio desulfuricans (strain ATCC 27774 / DSM 6949 / MB).